The chain runs to 339 residues: UDP-N-acetylglucosamine--N-acetylmuramyl-(pentapeptide) pyrophosphoryl-undecaprenol N-acetylglucosamine transferase (339 aa).

UDP-N-acetyl-alpha-D-glucosamine is bound by residues 9 to 11, Asn119, Arg160, Ser188, and Gln280; that span reads TGG.

It belongs to the glycosyltransferase 28 family. MurG subfamily.

The protein localises to the cell inner membrane. The enzyme catalyses di-trans,octa-cis-undecaprenyl diphospho-N-acetyl-alpha-D-muramoyl-L-alanyl-D-glutamyl-meso-2,6-diaminopimeloyl-D-alanyl-D-alanine + UDP-N-acetyl-alpha-D-glucosamine = di-trans,octa-cis-undecaprenyl diphospho-[N-acetyl-alpha-D-glucosaminyl-(1-&gt;4)]-N-acetyl-alpha-D-muramoyl-L-alanyl-D-glutamyl-meso-2,6-diaminopimeloyl-D-alanyl-D-alanine + UDP + H(+). Its pathway is cell wall biogenesis; peptidoglycan biosynthesis. Functionally, cell wall formation. Catalyzes the transfer of a GlcNAc subunit on undecaprenyl-pyrophosphoryl-MurNAc-pentapeptide (lipid intermediate I) to form undecaprenyl-pyrophosphoryl-MurNAc-(pentapeptide)GlcNAc (lipid intermediate II). This is UDP-N-acetylglucosamine--N-acetylmuramyl-(pentapeptide) pyrophosphoryl-undecaprenol N-acetylglucosamine transferase from Thermus thermophilus (strain ATCC BAA-163 / DSM 7039 / HB27).